The following is a 227-amino-acid chain: PKHD-type hydroxylase Bcen_3557 (227 aa).

One can recognise a Fe2OG dioxygenase domain in the interval 78 to 178 (KVFPPLFNRY…RVASFFWIQS (101 aa)). The Fe cation site is built by histidine 96, aspartate 98, and histidine 159. Arginine 169 contacts 2-oxoglutarate.

The cofactor is Fe(2+). Requires L-ascorbate as cofactor.

This chain is PKHD-type hydroxylase Bcen_3557, found in Burkholderia orbicola (strain AU 1054).